Here is a 246-residue protein sequence, read N- to C-terminus: Submandibular gland secretory Glx-rich protein CA (246 aa).

Residues 1–18 form the signal peptide; it reads MLVVLLTAALLALSSAQG. The tract at residues 14 to 223 is disordered; that stretch reads SSAQGTDEEV…SGRPKKPLLP (210 aa). 7 stretches are compositionally biased toward low complexity: residues 39-50, 58-71, 81-93, 104-116, 127-141, 150-159, and 178-196; these read PVDSGSDPPSAD, EGES…EPPA, QQEP…QEPP, QQEP…PPAT, QQESTQAENQ, and VESP…QQTN. 5 consecutive repeat copies span residues 67–89, 90–112, 113–135, 136–158, and 159–181. The interval 67–181 is 5 X 23 AA tandem repeats; that stretch reads EEPPATSGSE…QPEEGNVESP (115 aa). Positions 197–216 are enriched in basic and acidic residues; the sequence is PEEKPPAPKTQEEPQHDSGR.

Submandibular gland acinar cells.

The protein localises to the secreted. Its function is as follows. GRP proteins have a marked affinity for hydroxyapatite. They may play a role in the formation of the protective acquired pellicle at the saliva-tooth interface. The chain is Submandibular gland secretory Glx-rich protein CA (Grpca) from Rattus norvegicus (Rat).